The sequence spans 203 residues: dTTP/UTP pyrophosphatase (203 aa).

Aspartate 74 serves as the catalytic Proton acceptor.

The protein belongs to the Maf family. YhdE subfamily. A divalent metal cation serves as cofactor.

The protein resides in the cytoplasm. It catalyses the reaction dTTP + H2O = dTMP + diphosphate + H(+). It carries out the reaction UTP + H2O = UMP + diphosphate + H(+). Functionally, nucleoside triphosphate pyrophosphatase that hydrolyzes dTTP and UTP. May have a dual role in cell division arrest and in preventing the incorporation of modified nucleotides into cellular nucleic acids. The polypeptide is dTTP/UTP pyrophosphatase (Treponema denticola (strain ATCC 35405 / DSM 14222 / CIP 103919 / JCM 8153 / KCTC 15104)).